An 873-amino-acid polypeptide reads, in one-letter code: Zinc fingers and homeoboxes protein 1 (873 aa).

Positions 24–63 are disordered; it reads LISDLDEGPPVLTPVENTRAESISSDEEVHESVDSDNQQN. A Phosphothreonine modification is found at threonine 36. Serine 45, serine 47, and serine 48 each carry phosphoserine. 2 C2H2-type zinc fingers span residues 70–93 and 102–125; these read YECKYCTFQTPDLNMFTFHVDSEH and YVCVECNFLTKRYDALSEHNLKYH. Lysine 159 is covalently cross-linked (Glycyl lysine isopeptide (Lys-Gly) (interchain with G-Cter in SUMO2)). A disordered region spans residues 200–236; sequence HNSVEDVPEEKENEIKPDREEIVENPSSSASESNTST. Serine 202 carries the phosphoserine modification. The span at 212-221 shows a compositional bias: basic and acidic residues; it reads NEIKPDREEI. The span at 223–236 shows a compositional bias: low complexity; it reads ENPSSSASESNTST. A required for dimerization region spans residues 272 to 432; the sequence is NSNLIPKVLI…QNNIQKSQVP (161 aa). Positions 272 to 564 are required for interaction with NFYA; that stretch reads NSNLIPKVLI…AQPKQSWNPF (293 aa). A DNA-binding region (homeobox 1) is located at residues 284–346; it reads NSIPTYNAAL…LKHGVSWTPE (63 aa). Glycyl lysine isopeptide (Lys-Gly) (interchain with G-Cter in SUMO2) cross-links involve residues lysine 441, lysine 454, lysine 485, and lysine 629. 2 consecutive DNA-binding regions (homeobox) follow at residues 464–526 and 569–630; these read SFGI…KSNQ and PQKF…EEKM. Disordered stretches follow at residues 626-667 and 732-769; these read KEEK…ICKK and SSMNGLSSLRKRGRGRPKGRGRGRPRGRPRGSKRINNW. Residue serine 648 is modified to Phosphoserine. A DNA-binding region (homeobox 4) is located at residues 660-722; sequence STGKICKKTP…YAWKNGNLKW (63 aa). The segment at 734 to 768 is required for nuclear localization; that stretch reads MNGLSSLRKRGRGRPKGRGRGRPRGRPRGSKRINN. Residues 740-764 show a composition bias toward basic residues; it reads LRKRGRGRPKGRGRGRPRGRPRGSK. Residue serine 774 is modified to Phosphoserine. Residues 777 to 832 constitute a DNA-binding region (homeobox 5); it reads KFKTGTAILKDYYLKHKFLNEQDLDELVNKSHMGYEQVREWFAERQRRSELGIELF. The tract at residues 829–873 is disordered; that stretch reads IELFEENEEEDEVIDDQEEDEEETDDSDTWEPPRHVKRKLSKSDD. The span at 831 to 857 shows a compositional bias: acidic residues; sequence LFEENEEEDEVIDDQEEDEEETDDSDT. The required for repressor activity stretch occupies residues 831–873; the sequence is LFEENEEEDEVIDDQEEDEEETDDSDTWEPPRHVKRKLSKSDD. The span at 863-873 shows a compositional bias: basic residues; that stretch reads HVKRKLSKSDD.

This sequence belongs to the ZHX family. Forms homodimers. Heterodimer (via HD1 domain) with ZHX2 (via HD1 domain). Also forms a heterodimer with ZHX3 which is a prerequisite for repressor activity. Interacts with ATF7IP and NFYA. Interacts (via homeobox domains) with DNMT3B (via PWWP domain).

It localises to the nucleus. In terms of biological role, acts as a transcriptional repressor. Increases DNMT3B-mediated repressive transcriptional activity when DNMT3B is tethered to DNA. May link molecule between DNMT3B and other co-repressor proteins. In Pan troglodytes (Chimpanzee), this protein is Zinc fingers and homeoboxes protein 1 (ZHX1).